A 262-amino-acid chain; its full sequence is Outer dense fiber protein 1 (262 aa).

A phosphoserine mark is found at serine 5 and serine 10. Copy 1 of the repeat occupies 34-38; it reads RCLCD. The segment at 34-77 is 2 X 5 AA repeats of [RC]-C-L-C-D; sequence RCLCDLYMHPYCCCDLHPYPYCLCYSKRSRSCGLCDLYPCCLCD. At serine 64 the chain carries Phosphoserine. The stretch at 73–77 is repeat 2; it reads CCLCD. Residues serine 86, serine 122, serine 123, serine 151, serine 167, serine 189, and serine 194 each carry the phosphoserine modification. The interval 209–250 is C-X-P repeat region; that stretch reads CNPCNPCSPCNPCNPCNPCNPCSPCSPCSPCNPCDPCNPCYP.

As to quaternary structure, interacts (via leucine zipper motif) with TCP11. Interacts with SPAG4. Interacts with KLC3. Interacts with CCDC42.

Its subcellular location is the cell projection. The protein localises to the cilium. It localises to the flagellum. The protein resides in the cytoplasm. It is found in the cytoskeleton. Its subcellular location is the microtubule organizing center. The protein localises to the centrosome. Its function is as follows. Component of the outer dense fibers (ODF) of spermatozoa. ODF are filamentous structures located on the outside of the axoneme in the midpiece and principal piece of the mammalian sperm tail and may help to maintain the passive elastic structures and elastic recoil of the sperm tail. This is Outer dense fiber protein 1 (ODF1) from Sus scrofa (Pig).